The sequence spans 100 residues: NADH-quinone oxidoreductase subunit K (100 aa).

The next 3 helical transmembrane spans lie at 1 to 21 (MIGL…GLAG), 28 to 48 (ILLL…GFVA), and 64 to 84 (FIIA…ILWF).

Belongs to the complex I subunit 4L family. As to quaternary structure, NDH-1 is composed of 14 different subunits. Subunits NuoA, H, J, K, L, M, N constitute the membrane sector of the complex.

The protein resides in the cell inner membrane. It carries out the reaction a quinone + NADH + 5 H(+)(in) = a quinol + NAD(+) + 4 H(+)(out). NDH-1 shuttles electrons from NADH, via FMN and iron-sulfur (Fe-S) centers, to quinones in the respiratory chain. The immediate electron acceptor for the enzyme in this species is believed to be ubiquinone. Couples the redox reaction to proton translocation (for every two electrons transferred, four hydrogen ions are translocated across the cytoplasmic membrane), and thus conserves the redox energy in a proton gradient. The protein is NADH-quinone oxidoreductase subunit K of Helicobacter pylori (strain Shi470).